A 325-amino-acid polypeptide reads, in one-letter code: uncharacterized protein (325 aa).

The signal sequence occupies residues 1–26; sequence MQGRVAGSCAPLGLLLVCLHLPGLFA. Positions 41–60 are enriched in polar residues; that stretch reads GTNLPQLGQPSSTGPSNSEH. Disordered regions lie at residues 41–110 and 147–189; these read GTNL…MDSW and GSGP…AGGK. A compositionally biased stretch (low complexity) spans 147–157; it reads GSGPLPGESSP.

Binds to numerous extracellular matrix proteins. In terms of tissue distribution, expressed in skin and tonsils.

The protein localises to the secreted. Its subcellular location is the extracellular space. It localises to the extracellular matrix. This is an uncharacterized protein from Homo sapiens (Human).